A 381-amino-acid polypeptide reads, in one-letter code: uncharacterized protein (381 aa).

11 helical membrane-spanning segments follow: residues 10–29, 75–93, 98–117, 130–147, 157–179, 199–221, 236–255, 262–284, 289–311, 323–340, and 355–374; these read IFFS…INFY, IILI…LIIL, LIKI…FTSR, YLFL…NLMV, TNNT…FLHY, IELQ…WYYE, LILK…ICYI, YFAN…IHGT, NILY…ILIL, ALLS…AGAL, and LFSV…WYFI.

Its subcellular location is the cell membrane. This is an uncharacterized protein from Rickettsia prowazekii (strain Madrid E).